A 216-amino-acid chain; its full sequence is Uracil phosphoribosyltransferase (216 aa).

Residues Arg85, Arg110, and 135–143 (DPMVATGYS) each bind 5-phospho-alpha-D-ribose 1-diphosphate. Uracil-binding positions include Ile200 and 205–207 (GDA). Asp206 lines the 5-phospho-alpha-D-ribose 1-diphosphate pocket.

It belongs to the UPRTase family. Requires Mg(2+) as cofactor.

The catalysed reaction is UMP + diphosphate = 5-phospho-alpha-D-ribose 1-diphosphate + uracil. It functions in the pathway pyrimidine metabolism; UMP biosynthesis via salvage pathway; UMP from uracil: step 1/1. With respect to regulation, allosterically activated by GTP. Its function is as follows. Catalyzes the conversion of uracil and 5-phospho-alpha-D-ribose 1-diphosphate (PRPP) to UMP and diphosphate. The polypeptide is Uracil phosphoribosyltransferase (Burkholderia thailandensis (strain ATCC 700388 / DSM 13276 / CCUG 48851 / CIP 106301 / E264)).